The sequence spans 356 residues: Heparan sulfate 2-O-sulfotransferase 1 (356 aa).

At 1–11 the chain is on the cytoplasmic side; that stretch reads MGLLRIMMPPK. A helical; Signal-anchor for type II membrane protein membrane pass occupies residues 12–28; it reads LQLLAVVAFAVAMLFLE. The stretch at 24 to 51 forms a coiled coil; it reads MLFLENQIQKLEESRAKLERAIARHEVR. The Lumenal portion of the chain corresponds to 29–356; it reads NQIQKLEESR…FYEKIYPKSN (328 aa). Positions 83, 84, 85, 86, 87, and 88 each coordinate adenosine 3',5'-bisphosphate. N108 and N127 each carry an N-linked (GlcNAc...) asparagine glycan. Residues H140 and H142 contribute to the active site. 2 residues coordinate adenosine 3',5'-bisphosphate: R164 and S172. 2 disulfides stabilise this stretch: C201-C209 and C222-C228. Y279, S285, T290, and K293 together coordinate adenosine 3',5'-bisphosphate.

The protein belongs to the sulfotransferase 3 family. As to quaternary structure, homotrimer. Interacts with the C5-epimerase GLCE. In terms of processing, N-glycosylated. Widely expressed. Expressed at higher level in lung and brain. Weakly expressed in spleen.

Its subcellular location is the golgi apparatus membrane. Catalyzes the transfer of a sulfo group from 3'-phospho-5'-adenylyl sulfate (PAPS) to the 2-OH position of iduronic acid (IdoA) or glucuronic acid (GlcA) within the heparan sulfate (HS) chain and participates in HS biosynthesis. Required for metanephric development of kidney formation, suggesting that 2-O-sulfation within HS is essential for signaling between ureteric bud and metanephric mesenchyme. The sequence is that of Heparan sulfate 2-O-sulfotransferase 1 from Mus musculus (Mouse).